The chain runs to 596 residues: Protein FlbA (596 aa).

TPR repeat units lie at residues 91-124 (GLAW…LPDH), 159-192 (VEGA…NPEA), 193-226 (AVLW…APDF), and 228-260 (KAYH…PGSP).

The polypeptide is Protein FlbA (flbA) (Caulobacter vibrioides (strain ATCC 19089 / CIP 103742 / CB 15) (Caulobacter crescentus)).